We begin with the raw amino-acid sequence, 148 residues long: Protein-arginine-phosphatase (148 aa).

The active-site Nucleophile is cysteine 9. 10-15 (TGNTCR) contacts substrate. The active site involves arginine 15. The active-site Proton donor is aspartate 117.

Belongs to the low molecular weight phosphotyrosine protein phosphatase family. As to quaternary structure, is present in solution as a mixture of monomers, dimers and higher order oligomers (trimers and tetramers).

The enzyme catalyses N(omega)-phospho-L-arginyl-[protein] + H2O = L-arginyl-[protein] + phosphate. With respect to regulation, irreversibly inhibited by the synthetic inhibitor cyc-SeCN-amidine, which inactivates the enzyme by inducing disulfide bond formation between the two active site cysteine residues Cys-9 and Cys-14. Its function is as follows. Catalyzes the specific dephosphorylation of phosphoarginine residues in proteins. Probably counteracts the protein arginine kinase McsB in vivo. Exhibits almost no activity against pTyr peptides. Protein arginine phosphorylation has a physiologically important role and is involved in the regulation of many critical cellular processes, such as protein homeostasis, motility, competence, and stringent and stress responses, by regulating gene expression and protein activity. The sequence is that of Protein-arginine-phosphatase (ywle) from Geobacillus stearothermophilus (Bacillus stearothermophilus).